A 59-amino-acid polypeptide reads, in one-letter code: UPF0181 protein YoaH (59 aa).

It belongs to the UPF0181 family.

This is UPF0181 protein YoaH from Shigella sonnei (strain Ss046).